The primary structure comprises 84 residues: Tenecin-1 (84 aa).

Positions methionine 1–alanine 19 are cleaved as a signal peptide. Residues phenylalanine 20–arginine 41 constitute a propeptide that is removed on maturation. Cystine bridges form between cysteine 44–cysteine 75, cysteine 61–cysteine 81, and cysteine 65–cysteine 83.

This sequence belongs to the invertebrate defensin family. Type 1 subfamily.

It is found in the secreted. In terms of biological role, bactericidal protein produced in response to injury. It is cytotoxic to Gram-positive bacteria. In Tenebrio molitor (Yellow mealworm beetle), this protein is Tenecin-1.